The following is a 367-amino-acid chain: MTEITHRTKTRPVKVGNLTIGGNNEVVVQSMTTTKTHDVEATVAEIKRLEEAGCQVVRVACPDMRAAEAIPAIKKQISIPLVVDIHFDYKLALKAIEGGADKIRINPGNIGKRHKVEAVVKAAKEKGIPIRIGVNAGSLEKRILDKYGYPTADGMVESALHHIKILEDLDFHDIIVSMKASDVNLAIEAYEKAAKAFDYPLHLGITESGTLFAGTVKSAAGLGAILNMGIGNTVRVSLSADPVEEVKVARELLKSFGLASNAATLISCPTCGRIEIDLISIANEMEEYISKIRAPIKVAVLGCAVNGPGEAREADIGIAGARGEGLLFRKGEIVRKVPEETMVEELKKEIDKIAEEYFAKQKELEKA.

4 residues coordinate [4Fe-4S] cluster: cysteine 268, cysteine 271, cysteine 303, and glutamate 310.

Belongs to the IspG family. Requires [4Fe-4S] cluster as cofactor.

The catalysed reaction is (2E)-4-hydroxy-3-methylbut-2-enyl diphosphate + oxidized [flavodoxin] + H2O + 2 H(+) = 2-C-methyl-D-erythritol 2,4-cyclic diphosphate + reduced [flavodoxin]. The protein operates within isoprenoid biosynthesis; isopentenyl diphosphate biosynthesis via DXP pathway; isopentenyl diphosphate from 1-deoxy-D-xylulose 5-phosphate: step 5/6. In terms of biological role, converts 2C-methyl-D-erythritol 2,4-cyclodiphosphate (ME-2,4cPP) into 1-hydroxy-2-methyl-2-(E)-butenyl 4-diphosphate. The sequence is that of 4-hydroxy-3-methylbut-2-en-1-yl diphosphate synthase (flavodoxin) from Halalkalibacterium halodurans (strain ATCC BAA-125 / DSM 18197 / FERM 7344 / JCM 9153 / C-125) (Bacillus halodurans).